The following is a 133-amino-acid chain: Small ribosomal subunit protein uS9 (133 aa).

The tract at residues 94-133 is disordered; the sequence is SADNRKPLKTEGHLSRDPRAKERRKYGLKKARKAPQFSKR. The segment covering 95-113 has biased composition (basic and acidic residues); sequence ADNRKPLKTEGHLSRDPRA. Over residues 114-133 the composition is skewed to basic residues; the sequence is KERRKYGLKKARKAPQFSKR.

This sequence belongs to the universal ribosomal protein uS9 family.

This Synechococcus sp. (strain CC9605) protein is Small ribosomal subunit protein uS9.